The chain runs to 293 residues: Probable adenylate kinase 1, chloroplastic (293 aa).

Residues 1–26 (MAAVQRLLRASASGGAAAAAAAARRR) constitute a mitochondrion transit peptide. Residue 70–75 (GVGKGT) coordinates ATP. Positions 90–119 (ATGDLVRDELASSGPLSVQLAEIVNQGKLV) are NMP. Residues threonine 91, arginine 96, 117–119 (KLV), 147–150 (GFPR), and glutamine 154 contribute to the AMP site. The LID stretch occupies residues 183-231 (GRRICGQCGKNFNLACIDVKGENGLPPIYMAPLLPPNNCMSKLITRADD). Residues arginine 184 and 193-194 (NF) contribute to the ATP site. Residues arginine 228 and arginine 239 each contribute to the AMP site.

The protein belongs to the adenylate kinase family.

The protein localises to the mitochondrion. It carries out the reaction AMP + ATP = 2 ADP. Functionally, catalyzes the reversible transfer of the terminal phosphate group between ATP and AMP. Plays an important role in cellular energy homeostasis and in adenine nucleotide metabolism. This chain is Probable adenylate kinase 1, chloroplastic, found in Oryza sativa subsp. japonica (Rice).